A 511-amino-acid chain; its full sequence is Maturase K (511 aa).

It belongs to the intron maturase 2 family. MatK subfamily.

It is found in the plastid. The protein localises to the chloroplast. Its function is as follows. Usually encoded in the trnK tRNA gene intron. Probably assists in splicing its own and other chloroplast group II introns. This Campsis radicans (Trumpet creeper) protein is Maturase K.